A 433-amino-acid chain; its full sequence is MRIRGVSDFDYLLLLTMLALTSIGILFIYSSGVNSEGHVISREYLKQIVWAVMGVVLMLSVSMYDYHRFKDRTTLIFAGFILLLIYTRLFGRYVNGAKSWIGVGEFGIQISEFAKIAYILYLAHYLVYSQSEPMLKRFAKAGVITLLPMALILSQPDLGTASVYLPIFLVMCFIAGFPLRLIFAVVCVVLLTLLFTLLPLWEQTFLQYQGVATRIADSRMLSLFVFFSLSATSAVAVVGYLLSGRKYYYWITYALGMVSISYGASLLGVRVLKPYQMMRLIIFLNPEVDPLKAGWHIIQSMIAIGSGGAFGMGYLRGPQSHYRFLPQQSTDFIFSILSEEWGFVGGVIVFGLYLLFFLHTLSIMSHVDDLYGKLIASGVLGMFLFHFVVNVGMTMGIMPITGIPLLLLSYGGSSLWTAMIATGLLMSINARQL.

A run of 12 helical transmembrane segments spans residues 9–29, 44–64, 74–94, 100–120, 158–178, 181–201, 221–241, 249–269, 295–315, 341–361, 378–398, and 400–420; these read FDYL…LFIY, YLKQ…VSMY, TLIF…GRYV, WIGV…AYIL, LGTA…AGFP, LIFA…LPLW, LSLF…VGYL, YWIT…LLGV, WHII…MGYL, WGFV…LHTL, GVLG…MGIM, and ITGI…TAMI.

Belongs to the SEDS family. MrdB/RodA subfamily.

Its subcellular location is the cell inner membrane. It carries out the reaction [GlcNAc-(1-&gt;4)-Mur2Ac(oyl-L-Ala-gamma-D-Glu-L-Lys-D-Ala-D-Ala)](n)-di-trans,octa-cis-undecaprenyl diphosphate + beta-D-GlcNAc-(1-&gt;4)-Mur2Ac(oyl-L-Ala-gamma-D-Glu-L-Lys-D-Ala-D-Ala)-di-trans,octa-cis-undecaprenyl diphosphate = [GlcNAc-(1-&gt;4)-Mur2Ac(oyl-L-Ala-gamma-D-Glu-L-Lys-D-Ala-D-Ala)](n+1)-di-trans,octa-cis-undecaprenyl diphosphate + di-trans,octa-cis-undecaprenyl diphosphate + H(+). It functions in the pathway cell wall biogenesis; peptidoglycan biosynthesis. In terms of biological role, peptidoglycan polymerase that is essential for cell wall elongation. The protein is Peptidoglycan glycosyltransferase RodA of Treponema pallidum (strain Nichols).